We begin with the raw amino-acid sequence, 94 residues long: Co-chaperonin GroES (94 aa).

The protein belongs to the GroES chaperonin family. Heptamer of 7 subunits arranged in a ring. Interacts with the chaperonin GroEL.

The protein localises to the cytoplasm. Its function is as follows. Together with the chaperonin GroEL, plays an essential role in assisting protein folding. The GroEL-GroES system forms a nano-cage that allows encapsulation of the non-native substrate proteins and provides a physical environment optimized to promote and accelerate protein folding. GroES binds to the apical surface of the GroEL ring, thereby capping the opening of the GroEL channel. The polypeptide is Co-chaperonin GroES (Ehrlichia chaffeensis (strain ATCC CRL-10679 / Arkansas)).